The chain runs to 191 residues: Small ribosomal subunit protein eS7 (191 aa).

The protein belongs to the eukaryotic ribosomal protein eS7 family.

This Hordeum vulgare (Barley) protein is Small ribosomal subunit protein eS7 (RPS7).